The following is a 121-amino-acid chain: Heme-degrading monooxygenase (121 aa).

Residues 2–101 form the ABM domain; sequence IIVTNTIKVE…EQREDRKGIV (100 aa). Fe cation is bound at residue Asn6. Residues 76–98 are disordered; that stretch reads KSDSFKKAHGRTKDTREQREDRK. Residues 78–98 show a composition bias toward basic and acidic residues; sequence DSFKKAHGRTKDTREQREDRK. Position 84 (His84) interacts with heme.

This sequence belongs to the antibiotic biosynthesis monooxygenase family. Heme-degrading monooxygenase IsdG subfamily. Homodimer.

The protein resides in the cytoplasm. The enzyme catalyses heme b + 3 reduced [NADPH--hemoprotein reductase] + 3 O2 = biliverdin IXalpha + CO + Fe(2+) + 3 oxidized [NADPH--hemoprotein reductase] + 3 H2O + H(+). Allows bacterial pathogens to use the host heme as an iron source. Catalyzes the oxidative degradation of the heme macrocyclic porphyrin ring to the biliverdin in the presence of a suitable electron donor such as ascorbate or NADPH--cytochrome P450 reductase, with subsequent release of free iron. The protein is Heme-degrading monooxygenase of Listeria innocua serovar 6a (strain ATCC BAA-680 / CLIP 11262).